Reading from the N-terminus, the 686-residue chain is MIPGKYRSVSGRAANNVNCGLHLVIQTSSLPEKNKVEFKLNKDTSSFPGRLLQHDLERNYSSRQGDHINLVSSSLSSFPILQRSSEEKILYSDRLSLERQKLTVCPIINGEDHLRLLNFQHNFITRIQNISNLQKLISLDLYDNQIEEISGLSTLRCLRVLLLGKNRIKKISNLENLKSLDVLDLHGNQITKIENINHLCELRVLNLARNFLSHVDNLNGLDSLTELNLRHNQITFVRDVDNLPCLQHLFLSFNNISSFDSVSCLADSSSLSDITFDGNPIAQESWYKHTVLQNMMQLRQLDMKRITEEERRMASVLAKKEEEKKRESHKQSLLKEKKRLTINNVARQWDLQQQRVANIATNEDRKDSDSPQDPCQIDGSTLSAFPEETGPLDSGLNNALQGLSVIDTYLVEVDGDTLSLYGSGALESLDRNWSVQTAGMITTVSFTFIEFDEIVQVLPKLKIKFPNSLHLKFKETNLVMLQQFNALAQLRRIDQLTIDPQGNPVVNFTLWKYYVLFRLSHFSMQKINGTEVTQNDMIMAERLFGILAHVASSELPQYRLISILGDARKKQFRYLLESKGKKPGIINEENNDSKRLVGENTNRATLNYTTRDFYNEKLEEIKEKKKFCKTYIEDLVKEATEINMKNEALQKLWPQMFIELVRDAVIEIRNKNSYMKLCLQQITDQK.

7 LRR repeats span residues 113-134 (HLRL…SNLQ), 135-156 (KLIS…STLR), 157-178 (CLRV…ENLK), 179-200 (SLDV…NHLC), 201-222 (ELRV…NGLD), 223-244 (SLTE…DNLP), and 245-266 (CLQH…SCLA). The 39-residue stretch at 279 to 317 (NPIAQESWYKHTVLQNMMQLRQLDMKRITEEERRMASVL) folds into the LRRCT domain. A coiled-coil region spans residues 303–341 (MKRITEEERRMASVLAKKEEEKKRESHKQSLLKEKKRLT). The interval 360–388 (ATNEDRKDSDSPQDPCQIDGSTLSAFPEE) is disordered.

Part of the neuronal tubulin polyglutamylase complex which contains TPGS1, TPGS2, TTLL1, LRRC49 and NICN1. Interacts with PCM1; TTLL1, TPGS1, TPGS2 and LRRC49.

It is found in the cytoplasm. The protein resides in the cytoskeleton. The protein localises to the microtubule organizing center. It localises to the centrosome. Its subcellular location is the centriolar satellite. Functionally, subunit of the tubulin polyglutamylase complex (TPGC). The complex mediates cilia and flagella polyglutamylation which is essential for their biogenesis and motility. This Homo sapiens (Human) protein is Leucine-rich repeat-containing protein 49.